The primary structure comprises 320 residues: Cell-cell adhesion glycoprotein 64 (320 aa).

Positions 1-19 are cleaved as a signal peptide; it reads MNKFITLFVLLASVSVAMS. Cystine bridges form between C39-C57, C67-C79, C73-C86, C98-C110, C104-C115, C123-C138, C132-C147, C157-C171, and C165-C176. N49 carries N-linked (GlcNAc...) asparagine glycosylation. N-linked (GlcNAc...) asparagine glycosylation occurs at N80. 2 N-linked (GlcNAc...) asparagine glycosylation sites follow: N141 and N158. A glycan (N-linked (GlcNAc...) asparagine) is linked at N187. Intrachain disulfides connect C188-C202 and C194-C207. N216 carries N-linked (GlcNAc...) asparagine glycosylation. Disulfide bonds link C226-C246, C232-C234, C266-C285, and C270-C281. S298 is lipidated: GPI-like-anchor amidated serine. A propeptide spans 299-320 (removed in mature form); the sequence is SATTIAFNAFVVFAIVLSVLLF.

Post-translationally, contains 18 disulfide bonds. In terms of processing, the GPI-like-anchor contains a phosphoceramide group, rather than a phosphatidyl group.

The protein localises to the cell membrane. Cell-cell adhesion during development. This is Cell-cell adhesion glycoprotein 64 from Heterostelium pallidum (Cellular slime mold).